Here is a 592-residue protein sequence, read N- to C-terminus: Aspartate--tRNA(Asp/Asn) ligase (592 aa).

Glu-182 is a binding site for L-aspartate. Positions 206–209 (QIFK) are aspartate. Arg-228 lines the L-aspartate pocket. Residues 228–230 (RDE) and Gln-237 contribute to the ATP site. His-455 contacts L-aspartate. Position 489 (Glu-489) interacts with ATP. Residue Arg-496 coordinates L-aspartate. 541–544 (GLDR) is a binding site for ATP.

Belongs to the class-II aminoacyl-tRNA synthetase family. Type 1 subfamily. As to quaternary structure, homodimer.

The protein localises to the cytoplasm. It catalyses the reaction tRNA(Asx) + L-aspartate + ATP = L-aspartyl-tRNA(Asx) + AMP + diphosphate. Its function is as follows. Aspartyl-tRNA synthetase with relaxed tRNA specificity since it is able to aspartylate not only its cognate tRNA(Asp) but also tRNA(Asn). Reaction proceeds in two steps: L-aspartate is first activated by ATP to form Asp-AMP and then transferred to the acceptor end of tRNA(Asp/Asn). This chain is Aspartate--tRNA(Asp/Asn) ligase, found in Thermoanaerobacter sp. (strain X514).